The primary structure comprises 460 residues: A-type ATP synthase subunit B (460 aa).

The protein belongs to the ATPase alpha/beta chains family. In terms of assembly, has multiple subunits with at least A(3), B(3), C, D, E, F, H, I and proteolipid K(x).

It localises to the cell membrane. Its function is as follows. Component of the A-type ATP synthase that produces ATP from ADP in the presence of a proton gradient across the membrane. The B chain is a regulatory subunit. The sequence is that of A-type ATP synthase subunit B from Thermoplasma acidophilum (strain ATCC 25905 / DSM 1728 / JCM 9062 / NBRC 15155 / AMRC-C165).